The chain runs to 120 residues: MERIMFRAKIHRATVTQADLDYVGSVTIDQDLLDAADILVNERVDIYNITNGNRLSTYALSGPRGSGVIGINGAAAHLVQPGDLVIIAAYGNFSEEEARTLEPRVVLVDAQNRILDLQPA.

The active-site Schiff-base intermediate with substrate; via pyruvic acid is S25. S25 is modified (pyruvic acid (Ser)). Position 57 (T57) interacts with substrate. The active-site Proton donor is the Y58. Residue G73–A75 coordinates substrate.

It belongs to the PanD family. In terms of assembly, heterooctamer of four alpha and four beta subunits. It depends on pyruvate as a cofactor. Is synthesized initially as an inactive proenzyme, which is activated by self-cleavage at a specific serine bond to produce a beta-subunit with a hydroxyl group at its C-terminus and an alpha-subunit with a pyruvoyl group at its N-terminus.

Its subcellular location is the cytoplasm. It catalyses the reaction L-aspartate + H(+) = beta-alanine + CO2. The protein operates within cofactor biosynthesis; (R)-pantothenate biosynthesis; beta-alanine from L-aspartate: step 1/1. Its function is as follows. Catalyzes the pyruvoyl-dependent decarboxylation of aspartate to produce beta-alanine. In Deinococcus geothermalis (strain DSM 11300 / CIP 105573 / AG-3a), this protein is Aspartate 1-decarboxylase.